Consider the following 289-residue polypeptide: UPF0276 protein BB1291 (289 aa).

Belongs to the UPF0276 family.

The protein is UPF0276 protein BB1291 of Bordetella bronchiseptica (strain ATCC BAA-588 / NCTC 13252 / RB50) (Alcaligenes bronchisepticus).